We begin with the raw amino-acid sequence, 90 residues long: uncharacterized protein (90 aa).

The interval methionine 1–arginine 26 is disordered. The stretch at asparagine 33–aspartate 66 forms a coiled coil.

This is an uncharacterized protein from Dictyostelium discoideum (Social amoeba).